Here is a 221-residue protein sequence, read N- to C-terminus: Max dimerization protein 1 (221 aa).

Residues R21 to K49 carry the Nuclear localization signal motif. Disordered stretches follow at residues H28–R67 and D176–Y202. The bHLH domain occupies N55–L107. A compositionally biased stretch (polar residues) spans S192–Y202.

Efficient DNA binding requires dimerization with another bHLH protein. Binds DNA as a heterodimer with MAX.

It is found in the nucleus. In terms of biological role, transcriptional repressor. MAD binds with MAX to form a sequence-specific DNA-binding protein complex which recognizes the core sequence 5'-CAC[GA]TG-3'. MAD thus antagonizes MYC transcriptional activity by competing for MAX. In Xenopus tropicalis (Western clawed frog), this protein is Max dimerization protein 1 (mxd1).